The primary structure comprises 478 residues: Trigger factor (478 aa).

Residues Gly-162–Pro-243 form the PPIase FKBP-type domain. The interval Lys-424–Lys-478 is disordered. Acidic residues predominate over residues Glu-448–Lys-478.

This sequence belongs to the FKBP-type PPIase family. Tig subfamily.

The protein resides in the cytoplasm. The enzyme catalyses [protein]-peptidylproline (omega=180) = [protein]-peptidylproline (omega=0). In terms of biological role, involved in protein export. Acts as a chaperone by maintaining the newly synthesized protein in an open conformation. Functions as a peptidyl-prolyl cis-trans isomerase. This chain is Trigger factor, found in Mycobacterium sp. (strain KMS).